The following is a 78-amino-acid chain: MIIPWQQLDPETLDSIIESFVLREGTDYGEQERSLAQKVEDIRSQLQSGEVVLVWSELHETLNIMPRSQLNAGGHAPY.

This sequence belongs to the UPF0270 family.

This is UPF0270 protein ECA4061 from Pectobacterium atrosepticum (strain SCRI 1043 / ATCC BAA-672) (Erwinia carotovora subsp. atroseptica).